We begin with the raw amino-acid sequence, 351 residues long: Fe(3+) ions import ATP-binding protein FbpC (351 aa).

The 235-residue stretch at 7–241 folds into the ABC transporter domain; the sequence is LTVKNLNKFF…PNHLETAKFM (235 aa). ATP is bound at residue 39 to 46; it reads GASGCGKT.

It belongs to the ABC transporter superfamily. Fe(3+) ion importer (TC 3.A.1.10) family. The complex is composed of two ATP-binding proteins (FbpC), two transmembrane proteins (FbpB) and a solute-binding protein (FbpA).

It is found in the cell inner membrane. It catalyses the reaction Fe(3+)(out) + ATP + H2O = Fe(3+)(in) + ADP + phosphate + H(+). Its function is as follows. Part of the ABC transporter complex FbpABC involved in Fe(3+) ions import. Responsible for energy coupling to the transport system. The protein is Fe(3+) ions import ATP-binding protein FbpC of Haemophilus influenzae (strain 86-028NP).